We begin with the raw amino-acid sequence, 239 residues long: Pyridoxine 5'-phosphate synthase (239 aa).

Asparagine 7 lines the 3-amino-2-oxopropyl phosphate pocket. 9-10 (DH) serves as a coordination point for 1-deoxy-D-xylulose 5-phosphate. 3-amino-2-oxopropyl phosphate is bound at residue arginine 18. Histidine 43 functions as the Proton acceptor in the catalytic mechanism. Positions 45 and 50 each coordinate 1-deoxy-D-xylulose 5-phosphate. Glutamate 70 acts as the Proton acceptor in catalysis. Threonine 100 provides a ligand contact to 1-deoxy-D-xylulose 5-phosphate. Histidine 191 (proton donor) is an active-site residue. Residues glycine 192 and 213-214 (GH) each bind 3-amino-2-oxopropyl phosphate.

Belongs to the PNP synthase family. Homooctamer; tetramer of dimers.

The protein localises to the cytoplasm. The enzyme catalyses 3-amino-2-oxopropyl phosphate + 1-deoxy-D-xylulose 5-phosphate = pyridoxine 5'-phosphate + phosphate + 2 H2O + H(+). The protein operates within cofactor biosynthesis; pyridoxine 5'-phosphate biosynthesis; pyridoxine 5'-phosphate from D-erythrose 4-phosphate: step 5/5. Its function is as follows. Catalyzes the complicated ring closure reaction between the two acyclic compounds 1-deoxy-D-xylulose-5-phosphate (DXP) and 3-amino-2-oxopropyl phosphate (1-amino-acetone-3-phosphate or AAP) to form pyridoxine 5'-phosphate (PNP) and inorganic phosphate. This chain is Pyridoxine 5'-phosphate synthase, found in Geotalea uraniireducens (strain Rf4) (Geobacter uraniireducens).